We begin with the raw amino-acid sequence, 669 residues long: DNA ligase (669 aa).

NAD(+)-binding positions include 33-37 (DLTYD), 82-83 (SL), and Glu-115. The N6-AMP-lysine intermediate role is filled by Lys-117. NAD(+)-binding residues include Arg-138, Glu-172, Lys-286, and Lys-310. Zn(2+) contacts are provided by Cys-401, Cys-404, Cys-417, and Cys-422.

This sequence belongs to the NAD-dependent DNA ligase family. LigA subfamily. Requires Mg(2+) as cofactor. The cofactor is Mn(2+).

The catalysed reaction is NAD(+) + (deoxyribonucleotide)n-3'-hydroxyl + 5'-phospho-(deoxyribonucleotide)m = (deoxyribonucleotide)n+m + AMP + beta-nicotinamide D-nucleotide.. Functionally, DNA ligase that catalyzes the formation of phosphodiester linkages between 5'-phosphoryl and 3'-hydroxyl groups in double-stranded DNA using NAD as a coenzyme and as the energy source for the reaction. It is essential for DNA replication and repair of damaged DNA. The chain is DNA ligase from Borrelia hermsii (strain HS1 / DAH).